Consider the following 430-residue polypeptide: Potassium channel subfamily K member 12 (430 aa).

Residues 1–38 are Cytoplasmic-facing; it reads MSSRSPRPPPRRCRRRLPRPSCCCCCCRRSHLNEDTGR. Residues 11–16 form an ER retention/retrieval signal region; that stretch reads RRCRRR. Residues 39–59 form a helical membrane-spanning segment; that stretch reads FVLLAALIGLYLVAGATVFSA. Asn-78 carries N-linked (GlcNAc...) asparagine glycosylation. The segment at residues 114–134 is an intramembrane region (pore-forming); the sequence is WDFPGAFYFVGTVVSTIGFGM. Positions 129, 130, and 131 each coordinate K(+). The tract at residues 129–134 is selectivity filter 1; that stretch reads TIGFGM. The chain crosses the membrane as a helical span at residues 145 to 165; it reads FLIAYGLFGCAGTILFFNLFL. Residues 166 to 212 are Cytoplasmic-facing; it reads ERIISLLAFIMRACRERQLRRSGLLPATFRRGSALSEADSLAGWKPS. The helical transmembrane segment at 213–233 threads the bilayer; sequence VYHVLLILGLFAVLLACCASA. Positions 243–263 form an intramembrane region, pore-forming; sequence YVDSLYFCFVTFSTIGFGDLV. Residues Thr-256, Ile-257, Gly-258, and Phe-259 each coordinate K(+). The tract at residues 256 to 261 is selectivity filter 2; that stretch reads TIGFGD. A helical membrane pass occupies residues 282–302; that stretch reads LFILLGVCCIYSLFNVISILI. Over 303–430 the chain is Cytoplasmic; sequence KQVLNWMLRK…NRLAETSASR (128 aa).

This sequence belongs to the two pore domain potassium channel (TC 1.A.1.8) family. In terms of assembly, homodimer. Heterodimer with KCNK13. In terms of tissue distribution, highly expressed in most brain regions. Also expressed in other tissues such as lung, kidney, liver, stomach and spleen.

The protein resides in the cell membrane. The protein localises to the endoplasmic reticulum membrane. It carries out the reaction K(+)(in) = K(+)(out). Its function is as follows. K(+) channel subunit that may homo- and heterodimerize to form functional channels with distinct regulatory and gating properties. Can heterodimerize with KCNK13 subunit to conduct K(+) outward rectifying currents at the plasma membrane. The homodimers are mainly retained in the endoplasmic reticulum compartment and may be targeted to the cell surface upon phosphorylation or other activation signals yet to be elucidated. The chain is Potassium channel subfamily K member 12 (Kcnk12) from Rattus norvegicus (Rat).